The sequence spans 507 residues: ATP synthase subunit alpha, chloroplastic (507 aa).

An ATP-binding site is contributed by G170–T177.

This sequence belongs to the ATPase alpha/beta chains family. As to quaternary structure, F-type ATPases have 2 components, CF(1) - the catalytic core - and CF(0) - the membrane proton channel. CF(1) has five subunits: alpha(3), beta(3), gamma(1), delta(1), epsilon(1). CF(0) has four main subunits: a, b, b' and c.

Its subcellular location is the plastid. It localises to the chloroplast thylakoid membrane. The enzyme catalyses ATP + H2O + 4 H(+)(in) = ADP + phosphate + 5 H(+)(out). Functionally, produces ATP from ADP in the presence of a proton gradient across the membrane. The alpha chain is a regulatory subunit. This chain is ATP synthase subunit alpha, chloroplastic, found in Illicium oligandrum (Star anise).